The chain runs to 246 residues: 3-deoxy-manno-octulosonate cytidylyltransferase (246 aa).

It belongs to the KdsB family.

It localises to the cytoplasm. The catalysed reaction is 3-deoxy-alpha-D-manno-oct-2-ulosonate + CTP = CMP-3-deoxy-beta-D-manno-octulosonate + diphosphate. Its pathway is nucleotide-sugar biosynthesis; CMP-3-deoxy-D-manno-octulosonate biosynthesis; CMP-3-deoxy-D-manno-octulosonate from 3-deoxy-D-manno-octulosonate and CTP: step 1/1. It participates in bacterial outer membrane biogenesis; lipopolysaccharide biosynthesis. Its function is as follows. Activates KDO (a required 8-carbon sugar) for incorporation into bacterial lipopolysaccharide in Gram-negative bacteria. The polypeptide is 3-deoxy-manno-octulosonate cytidylyltransferase (Rickettsia massiliae (strain Mtu5)).